Reading from the N-terminus, the 1058-residue chain is Carbamoyl phosphate synthase large chain (1058 aa).

Residues Met1–Glu401 form a carboxyphosphate synthetic domain region. 12 residues coordinate ATP: Arg129, Arg169, Gly175, Gly176, Arg208, Ile210, Glu215, Gly241, Ile242, His243, Gln284, and Glu298. Residues Lys133–Val327 enclose the ATP-grasp 1 domain. Residues Gln284, Glu298, and Asn300 each coordinate Mg(2+). Gln284, Glu298, and Asn300 together coordinate Mn(2+). Residues Ile402–Ser546 are oligomerization domain. The segment at Ile547–Tyr929 is carbamoyl phosphate synthetic domain. The 191-residue stretch at Glu671 to Leu861 folds into the ATP-grasp 2 domain. ATP is bound by residues Arg707, Ser746, Ile748, Glu752, Gly777, Val778, His779, Ser780, Gln820, and Glu832. Mg(2+) is bound by residues Gln820, Glu832, and Asn834. Residues Gln820, Glu832, and Asn834 each coordinate Mn(2+). One can recognise an MGS-like domain in the interval Leu930–Ile1058. The segment at Leu930 to Ile1058 is allosteric domain.

The protein belongs to the CarB family. In terms of assembly, composed of two chains; the small (or glutamine) chain promotes the hydrolysis of glutamine to ammonia, which is used by the large (or ammonia) chain to synthesize carbamoyl phosphate. Tetramer of heterodimers (alpha,beta)4. Mg(2+) is required as a cofactor. It depends on Mn(2+) as a cofactor.

It carries out the reaction hydrogencarbonate + L-glutamine + 2 ATP + H2O = carbamoyl phosphate + L-glutamate + 2 ADP + phosphate + 2 H(+). The catalysed reaction is hydrogencarbonate + NH4(+) + 2 ATP = carbamoyl phosphate + 2 ADP + phosphate + 2 H(+). The protein operates within amino-acid biosynthesis; L-arginine biosynthesis; carbamoyl phosphate from bicarbonate: step 1/1. It participates in pyrimidine metabolism; UMP biosynthesis via de novo pathway; (S)-dihydroorotate from bicarbonate: step 1/3. Functionally, large subunit of the glutamine-dependent carbamoyl phosphate synthetase (CPSase). CPSase catalyzes the formation of carbamoyl phosphate from the ammonia moiety of glutamine, carbonate, and phosphate donated by ATP, constituting the first step of 2 biosynthetic pathways, one leading to arginine and/or urea and the other to pyrimidine nucleotides. The large subunit (synthetase) binds the substrates ammonia (free or transferred from glutamine from the small subunit), hydrogencarbonate and ATP and carries out an ATP-coupled ligase reaction, activating hydrogencarbonate by forming carboxy phosphate which reacts with ammonia to form carbamoyl phosphate. This Streptococcus equi subsp. zooepidemicus (strain H70) protein is Carbamoyl phosphate synthase large chain.